The primary structure comprises 260 residues: Ribonuclease HII (260 aa).

Residues 75–260 form the RNase H type-2 domain; the sequence is ELIAGVDEVG…FEPIKSIIKK (186 aa). Aspartate 81, glutamate 82, and aspartate 173 together coordinate a divalent metal cation.

Belongs to the RNase HII family. The cofactor is Mn(2+). Requires Mg(2+) as cofactor.

Its subcellular location is the cytoplasm. It catalyses the reaction Endonucleolytic cleavage to 5'-phosphomonoester.. Its function is as follows. Endonuclease that specifically degrades the RNA of RNA-DNA hybrids. The chain is Ribonuclease HII from Streptococcus thermophilus (strain CNRZ 1066).